A 507-amino-acid polypeptide reads, in one-letter code: Probable Xaa-Pro aminopeptidase HCAG_02413 (507 aa).

Mn(2+) contacts are provided by aspartate 283, aspartate 294, glutamate 431, and glutamate 469.

It belongs to the peptidase M24B family. Mn(2+) is required as a cofactor.

The enzyme catalyses Release of any N-terminal amino acid, including proline, that is linked to proline, even from a dipeptide or tripeptide.. Catalyzes the removal of a penultimate prolyl residue from the N-termini of peptides. The sequence is that of Probable Xaa-Pro aminopeptidase HCAG_02413 from Ajellomyces capsulatus (strain NAm1 / WU24) (Darling's disease fungus).